The sequence spans 721 residues: Polyribonucleotide nucleotidyltransferase (721 aa).

Mg(2+)-binding residues include aspartate 495 and aspartate 501. One can recognise a KH domain in the interval 562–621; sequence PRLLSFRIDPELIGTVIGPGGRTIKNITERTNTKIDIEDSGIVTIASHDGAAAEEAQKII. The 69-residue stretch at 631 to 699 folds into the S1 motif domain; it reads GEVFTGSITR…NRGRINLTLR (69 aa). Residues 700-721 are disordered; it reads GVPQSGESADSQPAPTPVAPLS.

Belongs to the polyribonucleotide nucleotidyltransferase family. Requires Mg(2+) as cofactor.

Its subcellular location is the cytoplasm. The catalysed reaction is RNA(n+1) + phosphate = RNA(n) + a ribonucleoside 5'-diphosphate. In terms of biological role, involved in mRNA degradation. Catalyzes the phosphorolysis of single-stranded polyribonucleotides processively in the 3'- to 5'-direction. The sequence is that of Polyribonucleotide nucleotidyltransferase from Synechococcus sp. (strain CC9311).